Consider the following 190-residue polypeptide: Xanthine phosphoribosyltransferase 1 (190 aa).

Residues leucine 20 and asparagine 27 each coordinate xanthine. 128 to 132 (ANGEA) lines the 5-phospho-alpha-D-ribose 1-diphosphate pocket. Lysine 156 contributes to the xanthine binding site.

This sequence belongs to the purine/pyrimidine phosphoribosyltransferase family. Xpt subfamily. As to quaternary structure, homodimer.

It is found in the cytoplasm. The enzyme catalyses XMP + diphosphate = xanthine + 5-phospho-alpha-D-ribose 1-diphosphate. It participates in purine metabolism; XMP biosynthesis via salvage pathway; XMP from xanthine: step 1/1. In terms of biological role, converts the preformed base xanthine, a product of nucleic acid breakdown, to xanthosine 5'-monophosphate (XMP), so it can be reused for RNA or DNA synthesis. The protein is Xanthine phosphoribosyltransferase 1 of Clostridium botulinum (strain ATCC 19397 / Type A).